The sequence spans 525 residues: Light-independent protochlorophyllide reductase subunit B (525 aa).

Aspartate 36 provides a ligand contact to [4Fe-4S] cluster. The Proton donor role is filled by aspartate 274. A substrate-binding site is contributed by 409-410; that stretch reads GL. The segment at 433–464 is disordered; it reads HGGKAVAREESPVAPADLAPAATSDTPAAPSP. A compositionally biased stretch (low complexity) spans 444-464; sequence PVAPADLAPAATSDTPAAPSP.

It belongs to the ChlB/BchB/BchZ family. Protochlorophyllide reductase is composed of three subunits; BchL, BchN and BchB. Forms a heterotetramer of two BchB and two BchN subunits. It depends on [4Fe-4S] cluster as a cofactor.

The enzyme catalyses chlorophyllide a + oxidized 2[4Fe-4S]-[ferredoxin] + 2 ADP + 2 phosphate = protochlorophyllide a + reduced 2[4Fe-4S]-[ferredoxin] + 2 ATP + 2 H2O. It participates in porphyrin-containing compound metabolism; bacteriochlorophyll biosynthesis (light-independent). In terms of biological role, component of the dark-operative protochlorophyllide reductase (DPOR) that uses Mg-ATP and reduced ferredoxin to reduce ring D of protochlorophyllide (Pchlide) to form chlorophyllide a (Chlide). This reaction is light-independent. The NB-protein (BchN-BchB) is the catalytic component of the complex. This chain is Light-independent protochlorophyllide reductase subunit B, found in Rhodobacter capsulatus (strain ATCC BAA-309 / NBRC 16581 / SB1003).